We begin with the raw amino-acid sequence, 128 residues long: Large ribosomal subunit protein bL21 (128 aa).

The tract at residues 104 to 128 (GKKPSVGPRPKRVKAEPAPAADAAE) is disordered. Residues 119–128 (EPAPAADAAE) are compositionally biased toward low complexity.

It belongs to the bacterial ribosomal protein bL21 family. In terms of assembly, part of the 50S ribosomal subunit. Contacts protein L20.

Its function is as follows. This protein binds to 23S rRNA in the presence of protein L20. This chain is Large ribosomal subunit protein bL21, found in Rhodopseudomonas palustris (strain BisB5).